We begin with the raw amino-acid sequence, 98 residues long: MSLTYMNMFMAFTISLLGLLLYRSHMMSSLLCLEGMMLSLFVMMTMIILNTHLTLASMIPIILLVFAACEAALGLSLLVMVSTTYGMDYVQNLNLLQC.

A run of 3 helical transmembrane segments spans residues Met-1 to Leu-21, Ser-29 to Leu-49, and Ile-61 to Val-81.

The protein belongs to the complex I subunit 4L family. As to quaternary structure, core subunit of respiratory chain NADH dehydrogenase (Complex I) which is composed of 45 different subunits.

The protein localises to the mitochondrion inner membrane. The catalysed reaction is a ubiquinone + NADH + 5 H(+)(in) = a ubiquinol + NAD(+) + 4 H(+)(out). In terms of biological role, core subunit of the mitochondrial membrane respiratory chain NADH dehydrogenase (Complex I) which catalyzes electron transfer from NADH through the respiratory chain, using ubiquinone as an electron acceptor. Part of the enzyme membrane arm which is embedded in the lipid bilayer and involved in proton translocation. The protein is NADH-ubiquinone oxidoreductase chain 4L (MT-ND4L) of Platyrrhinus brachycephalus (Short-headed broad-nosed bat).